A 134-amino-acid polypeptide reads, in one-letter code: ATP synthase epsilon chain (134 aa).

Belongs to the ATPase epsilon chain family. F-type ATPases have 2 components, CF(1) - the catalytic core - and CF(0) - the membrane proton channel. CF(1) has five subunits: alpha(3), beta(3), gamma(1), delta(1), epsilon(1). CF(0) has three main subunits: a, b and c.

Its subcellular location is the cell membrane. Produces ATP from ADP in the presence of a proton gradient across the membrane. The protein is ATP synthase epsilon chain of Listeria monocytogenes serotype 4a (strain HCC23).